The chain runs to 158 residues: Auxin-responsive protein IAA31 (158 aa).

The segment covering 1–40 (MEVSNSCSSFSSSSVDSTKPSPSESSVNLSLSLTFPSTSP) has biased composition (low complexity). Residues 1 to 49 (MEVSNSCSSFSSSSVDSTKPSPSESSVNLSLSLTFPSTSPQREARQDWP) form a disordered region. An EAR-like (transcriptional repression) motif is present at residues 29–33 (LSLSL). Positions 72-157 (SLFVKVYMEG…RRLKITRPER (86 aa)) constitute a PB1 domain.

The protein belongs to the Aux/IAA family. Homodimers and heterodimers.

The protein localises to the nucleus. Its function is as follows. Aux/IAA proteins are short-lived transcriptional factors that function as repressors of early auxin response genes at low auxin concentrations. Repression is thought to result from the interaction with auxin response factors (ARFs), proteins that bind to the auxin-responsive promoter element (AuxRE). Formation of heterodimers with ARF proteins may alter their ability to modulate early auxin response genes expression. This is Auxin-responsive protein IAA31 (IAA31) from Arabidopsis thaliana (Mouse-ear cress).